Consider the following 525-residue polypeptide: Putative EGF-like domain-containing protein R659 (525 aa).

Residues 1–24 (MGNKWCGIFLTILLLAQMSQTIFG) form the signal peptide. Asn60, Asn77, Asn171, Asn181, Asn268, and Asn281 each carry an N-linked (GlcNAc...) asparagine; by host glycan. Residues 317–359 (LTQGCGNCDSNAECVFVSGSNSIVPKYQCKCKSGYVGNGTHCS) form the EGF-like domain. Cystine bridges form between Cys321–Cys330, Cys324–Cys345, and Cys347–Cys358. 2 N-linked (GlcNAc...) asparagine; by host glycosylation sites follow: Asn354 and Asn411.

The protein resides in the secreted. In Acanthamoeba polyphaga (Amoeba), this protein is Putative EGF-like domain-containing protein R659.